A 931-amino-acid polypeptide reads, in one-letter code: Phosphoenolpyruvate carboxylase (931 aa).

Residues H138 and K594 contribute to the active site.

Belongs to the PEPCase type 1 family. The cofactor is Mg(2+).

It catalyses the reaction oxaloacetate + phosphate = phosphoenolpyruvate + hydrogencarbonate. Functionally, forms oxaloacetate, a four-carbon dicarboxylic acid source for the tricarboxylic acid cycle. The sequence is that of Phosphoenolpyruvate carboxylase from Streptococcus agalactiae serotype III (strain NEM316).